Reading from the N-terminus, the 359-residue chain is 3-dehydroquinate synthase (359 aa).

NAD(+) contacts are provided by residues 70–75 (DGEQYK), 105–109 (GVIGD), 129–130 (TT), K142, K151, and 169–172 (FYKT). Residues E184, H247, and H264 each contribute to the Zn(2+) site.

This sequence belongs to the sugar phosphate cyclases superfamily. Dehydroquinate synthase family. It depends on Co(2+) as a cofactor. Zn(2+) serves as cofactor. Requires NAD(+) as cofactor.

Its subcellular location is the cytoplasm. It catalyses the reaction 7-phospho-2-dehydro-3-deoxy-D-arabino-heptonate = 3-dehydroquinate + phosphate. The protein operates within metabolic intermediate biosynthesis; chorismate biosynthesis; chorismate from D-erythrose 4-phosphate and phosphoenolpyruvate: step 2/7. Catalyzes the conversion of 3-deoxy-D-arabino-heptulosonate 7-phosphate (DAHP) to dehydroquinate (DHQ). This is 3-dehydroquinate synthase from Francisella tularensis subsp. mediasiatica (strain FSC147).